Consider the following 212-residue polypeptide: MAQTDKPTCIPPELPKMLKEFAKAAIRVQPQDLIQWAADYFEALSRGETPPVRERSERVALCNRAELTPELLKILHSQVAGRLIIRAEELAQMWKVVNLPTDLFNSVMNVGRFTEEIEWLKFLALACSALGVTITKTLKIVCEVLSCDHNGGSPRIPFSTFQFLYTYIAKVDGEISASHVSRMLNYMEQEVIGPDGIITVNDFTQNPRVQLE.

Positions Pro-12 to Thr-49 constitute an RIIa domain. A Phosphoserine modification is found at Ser-56. Residues Val-209–Glu-212 are interaction with RHPN1.

This sequence belongs to the ropporin family. Homodimer. Interacts with AKAP3 and RHPN1. May interact with SPA17. Interacts with FSCB; the interaction increases upon spermatozoa capacitation conditions. Interacts with CFAP61. Post-translationally, sumoylated, sumoylation decreases upon spermatozoa capacitation conditions. Testis specific in adult. Overexpressed in hematologic tumor cells.

Its subcellular location is the cell projection. The protein resides in the cilium. It localises to the flagellum. Functionally, important for male fertility. With ROPN1L, involved in fibrous sheath integrity and sperm motility, plays a role in PKA-dependent signaling processes required for spermatozoa capacitation. The sequence is that of Ropporin-1A (ROPN1) from Homo sapiens (Human).